A 335-amino-acid chain; its full sequence is ATP-dependent 6-phosphofructokinase (335 aa).

G11 contributes to the ATP binding site. 21–25 (RAVVR) is a binding site for ADP. Residues 72 to 73 (RY) and 102 to 105 (GDGS) each bind ATP. D103 contributes to the Mg(2+) binding site. Substrate is bound at residue 125-127 (TID). The Proton acceptor role is filled by D127. R154 provides a ligand contact to ADP. Residues R162 and 169 to 171 (MGR) each bind substrate. Residues 185-187 (GAD) and 213-215 (KKH) contribute to the ADP site. Residues E222, R244, and 250-253 (HIQR) each bind substrate.

Belongs to the phosphofructokinase type A (PFKA) family. ATP-dependent PFK group I subfamily. Prokaryotic clade 'B1' sub-subfamily. In terms of assembly, homotetramer. Requires Mg(2+) as cofactor.

Its subcellular location is the cytoplasm. The enzyme catalyses beta-D-fructose 6-phosphate + ATP = beta-D-fructose 1,6-bisphosphate + ADP + H(+). It participates in carbohydrate degradation; glycolysis; D-glyceraldehyde 3-phosphate and glycerone phosphate from D-glucose: step 3/4. Allosterically activated by ADP and other diphosphonucleosides, and allosterically inhibited by phosphoenolpyruvate. In terms of biological role, catalyzes the phosphorylation of D-fructose 6-phosphate to fructose 1,6-bisphosphate by ATP, the first committing step of glycolysis. In Streptococcus pneumoniae serotype 4 (strain ATCC BAA-334 / TIGR4), this protein is ATP-dependent 6-phosphofructokinase.